The following is a 503-amino-acid chain: Maturase K (503 aa).

Belongs to the intron maturase 2 family. MatK subfamily.

Its subcellular location is the plastid. The protein localises to the chloroplast. Functionally, usually encoded in the trnK tRNA gene intron. Probably assists in splicing its own and other chloroplast group II introns. The protein is Maturase K of Eucalyptus globulus (Tasmanian blue gum).